The following is a 59-amino-acid chain: Large ribosomal subunit protein uL30 (59 aa).

It belongs to the universal ribosomal protein uL30 family. As to quaternary structure, part of the 50S ribosomal subunit.

The chain is Large ribosomal subunit protein uL30 from Haemophilus influenzae (strain 86-028NP).